A 575-amino-acid polypeptide reads, in one-letter code: Guanine nucleotide-binding protein-like 3-like protein (575 aa).

The span at 1–30 (MMKLRHKNKKPGKGSKGCKKPAKQNGKKAA) shows a compositional bias: basic residues. The tract at residues 1–75 (MMKLRHKNKK…AAREQERHRR (75 aa)) is disordered. Positions 9–28 (KKPGKGSKGCKKPAKQNGKK) are required for nucleolar localization. Basic and acidic residues predominate over residues 42-72 (SNDHASREAELKKKRVGEMREKQQAAREQER). Positions 51-79 (ELKKKRVGEMREKQQAAREQERHRRRTIE) form a coiled coil. The region spanning 118 to 303 (YKEFHKVVEY…LLDAPGIVPG (186 aa)) is the CP-type G domain. Residues 166–169 (NKID), 252–259 (GLPNVGKS), and 296–299 (DAPG) each bind GTP. Lys470 is covalently cross-linked (Glycyl lysine isopeptide (Lys-Gly) (interchain with G-Cter in SUMO1)).

This sequence belongs to the TRAFAC class YlqF/YawG GTPase family. As to quaternary structure, interacts with MDM2; this interaction, which occurs in the nucleoplasm, stabilizes MDM2. Indirectly interacts with TP53, via MDM2-binding. Interacts with TERF1; this interaction probably occurs in the nucleoplasm and is increased during mitosis, when the nucleolus is disassembled. This binding may promote TERF1 homodimerization. Interacts with TERT.

Its subcellular location is the nucleus. It localises to the nucleolus. Its function is as follows. Stabilizes TERF1 telomeric association by preventing TERF1 recruitment by PML. Stabilizes TERF1 protein by preventing its ubiquitination and hence proteasomal degradation. Does so by interfering with TERF1-binding to FBXO4 E3 ubiquitin-protein ligase. Required for cell proliferation. By stabilizing TRF1 protein during mitosis, promotes metaphase-to-anaphase transition. Stabilizes MDM2 protein by preventing its ubiquitination, and hence proteasomal degradation. By acting on MDM2, may affect TP53 activity. Required for normal processing of ribosomal pre-rRNA. Binds GTP. The sequence is that of Guanine nucleotide-binding protein-like 3-like protein (GNL3L) from Bos taurus (Bovine).